Consider the following 128-residue polypeptide: Large ribosomal subunit protein bL17 (128 aa).

It belongs to the bacterial ribosomal protein bL17 family. As to quaternary structure, part of the 50S ribosomal subunit. Contacts protein L32.

The protein is Large ribosomal subunit protein bL17 of Histophilus somni (strain 129Pt) (Haemophilus somnus).